We begin with the raw amino-acid sequence, 888 residues long: Alanine--tRNA ligase (888 aa).

Positions 564, 568, 676, and 680 each coordinate Zn(2+).

It belongs to the class-II aminoacyl-tRNA synthetase family. Zn(2+) is required as a cofactor.

It is found in the cytoplasm. The enzyme catalyses tRNA(Ala) + L-alanine + ATP = L-alanyl-tRNA(Ala) + AMP + diphosphate. Functionally, catalyzes the attachment of alanine to tRNA(Ala) in a two-step reaction: alanine is first activated by ATP to form Ala-AMP and then transferred to the acceptor end of tRNA(Ala). Also edits incorrectly charged Ser-tRNA(Ala) and Gly-tRNA(Ala) via its editing domain. The protein is Alanine--tRNA ligase of Bartonella quintana (strain Toulouse) (Rochalimaea quintana).